Reading from the N-terminus, the 115-residue chain is LSM complex subunit LSM7 (115 aa).

The span at 1–10 shows a compositional bias: basic and acidic residues; that stretch reads MHQQHSKSEN. The tract at residues 1–23 is disordered; the sequence is MHQQHSKSENKPQQQRKKFEGPK. Residues 25 to 108 enclose the Sm domain; sequence EAILDLAKYK…LVSLSSAEGS (84 aa).

It belongs to the snRNP Sm proteins family. As to quaternary structure, component of the heptameric LSM1-LSM7 complex that forms a seven-membered ring structure with a donut shape. The LSm subunits are arranged in the order LSM1, LSM2, LSM3, LSM6, LSM5, LSM7 and LSM4. Except for LSM1, where a C-terminal helix crosses the ring structure to form additional interactions with LSM3 and LSM6, each subunit interacts only with its two neighboring subunits. The LSM1-LSM7 complex interacts with PAT1; within the complex PAT1 has direct interactions with LSM2 and LSM3. The LSM1-LSM7 complex interacts with XRN1. Component of the heptameric LSM2-LSM8 complex that forms a seven-membered ring structure with a donut shape; an RNA strand can pass through the hole in the center of the ring structure. The LSm subunits are arranged in the order LSM8, LSM2, LSM3, LSM6, LSM5, LSM7 and LSM4. Component of the spliceosome U4/U6-U5 tri-snRNP complex composed of the U4, U6 and U5 snRNAs and at least PRP3, PRP4, PRP6, PRP8, PRP18, PRP31, PRP38, SNU13, SNU23, SNU66, SNU114, SPP381, SMB1, SMD1, SMD2, SMD3, SMX2, SMX3, LSM2, LSM3, LSM4, LSM5, LSM6, LSM7, LSM8, BRR2 and DIB1. May be found in a complex comprising LSM2-LSM7 without LSM1 or LSM8; the complex associates with pre-P RNA and snoRNA SNR5.

It is found in the nucleus. It localises to the nucleolus. The protein resides in the cytoplasm. Its function is as follows. Component of LSm protein complexes, which are involved in RNA processing and may function in a chaperone-like manner. Component of the cytoplasmic LSM1-LSM7 complex which is involved in mRNA degradation by activating the decapping step. Together with PAT1, the LSM1-LSM7 complex binds to osmotic stress-activated mRNAs to attenuate the osmotic stress response, probably by limiting ribosome access to the mRNA and consequently translation. Component of the nuclear LSM2-LSM8 complex, which is involved in spliceosome assembly. The LSM2-LSM8 complex plays a role in the biogenesis of the spliceosomal U4/U6-U5 tri-snRNP complex by accelerating PRP24-mediated annealing of U4/U6 di-snRNA. The LSM2-LSM8 complex binds U6 snRNA terminating with a non-cyclic 3' phosphate group. LSM2-LSM8 is probably also involved in degradation of nuclear pre-mRNA by targeting them for decapping. LSM2-LSM8 could be involved in processing of pre-tRNAs, pre-rRNAs and U3 snoRNA, although involvement may be indirect. In a complex that probably contains LSM2-LSM7, but not LSM1 or LSM8, associates with the precursor of the RNA component of RNase P (pre-P RNA) and may be involved in maturing pre-P RNA; the complex also associates with snoRNA SNR5. In Saccharomyces cerevisiae (strain ATCC 204508 / S288c) (Baker's yeast), this protein is LSM complex subunit LSM7 (LSM7).